The primary structure comprises 197 residues: 7-methyl-GTP pyrophosphatase (197 aa).

Asp74 (proton acceptor) is an active-site residue.

It belongs to the Maf family. YceF subfamily. A divalent metal cation is required as a cofactor.

It localises to the cytoplasm. The catalysed reaction is N(7)-methyl-GTP + H2O = N(7)-methyl-GMP + diphosphate + H(+). In terms of biological role, nucleoside triphosphate pyrophosphatase that hydrolyzes 7-methyl-GTP (m(7)GTP). May have a dual role in cell division arrest and in preventing the incorporation of modified nucleotides into cellular nucleic acids. The chain is 7-methyl-GTP pyrophosphatase from Saccharophagus degradans (strain 2-40 / ATCC 43961 / DSM 17024).